A 288-amino-acid polypeptide reads, in one-letter code: Diaminopimelate epimerase (288 aa).

Residues Asn-17, Gln-47, and Asn-67 each contribute to the substrate site. Cys-76 functions as the Proton donor in the catalytic mechanism. Residues 77–78, Asn-163, Asn-196, and 214–215 contribute to the substrate site; these read GN and ER. Residue Cys-223 is the Proton acceptor of the active site. Position 224-225 (224-225) interacts with substrate; the sequence is GS.

The protein belongs to the diaminopimelate epimerase family. In terms of assembly, homodimer.

The protein localises to the cytoplasm. The catalysed reaction is (2S,6S)-2,6-diaminopimelate = meso-2,6-diaminopimelate. Its pathway is amino-acid biosynthesis; L-lysine biosynthesis via DAP pathway; DL-2,6-diaminopimelate from LL-2,6-diaminopimelate: step 1/1. Functionally, catalyzes the stereoinversion of LL-2,6-diaminopimelate (L,L-DAP) to meso-diaminopimelate (meso-DAP), a precursor of L-lysine and an essential component of the bacterial peptidoglycan. In Rhodopseudomonas palustris (strain BisB18), this protein is Diaminopimelate epimerase.